The sequence spans 253 residues: 4-hydroxy-tetrahydrodipicolinate reductase (253 aa).

Residues 8 to 13 (GAKGRM), Asp34, 76 to 78 (GTT), and 108 to 111 (APNF) each bind NAD(+). His138 acts as the Proton donor/acceptor in catalysis. A (S)-2,3,4,5-tetrahydrodipicolinate-binding site is contributed by His139. Lys142 functions as the Proton donor in the catalytic mechanism. Residue 148–149 (GT) coordinates (S)-2,3,4,5-tetrahydrodipicolinate.

Belongs to the DapB family.

Its subcellular location is the cytoplasm. The catalysed reaction is (S)-2,3,4,5-tetrahydrodipicolinate + NAD(+) + H2O = (2S,4S)-4-hydroxy-2,3,4,5-tetrahydrodipicolinate + NADH + H(+). It carries out the reaction (S)-2,3,4,5-tetrahydrodipicolinate + NADP(+) + H2O = (2S,4S)-4-hydroxy-2,3,4,5-tetrahydrodipicolinate + NADPH + H(+). It participates in amino-acid biosynthesis; L-lysine biosynthesis via DAP pathway; (S)-tetrahydrodipicolinate from L-aspartate: step 4/4. In terms of biological role, catalyzes the conversion of 4-hydroxy-tetrahydrodipicolinate (HTPA) to tetrahydrodipicolinate. The protein is 4-hydroxy-tetrahydrodipicolinate reductase of Bifidobacterium animalis subsp. lactis (strain AD011).